A 140-amino-acid polypeptide reads, in one-letter code: Large ribosomal subunit protein uL3 (140 aa).

It belongs to the universal ribosomal protein uL3 family. As to quaternary structure, part of the 50S ribosomal subunit. Forms a cluster with proteins L14 and L19.

One of the primary rRNA binding proteins, it binds directly near the 3'-end of the 23S rRNA, where it nucleates assembly of the 50S subunit. The polypeptide is Large ribosomal subunit protein uL3 (rplC) (Planobispora rosea).